A 326-amino-acid chain; its full sequence is Glycine N(alpha)-acyltransferase (326 aa).

Belongs to the acetyltransferase family.

The catalysed reaction is a (3R)-hydroxyacyl-[ACP] + glycine = a lyso-glycine lipid + holo-[ACP] + H(+). The enzyme catalyses (3R)-hydroxyhexadecanoyl-[ACP] + glycine = N-[(3R)-3-hydroxyhexadecanoyl]-glycine + holo-[ACP] + H(+). Its pathway is lipid metabolism. Is involved in the production of glycine lipids (GL), which are phosphorus-free membrane lipids. Catalyzes the first step of GL biosynthesis, i.e. the N-acylation of glycine via addition of a 3-hydroxy fatty acyl group, to form a range of monoacylated glycine (also named lyso-glycine lipids or lyso-GL). As an example, catalyzes the production of commendamide, an N-acylated (3-OH C16:0) derivative of glycine with hemolytic activity and the ability to solubilize cholesterol micelles; this compound can also activate NF-kB through the G-protein coupled receptor GPCR G2A/132. In Phocaeicola vulgatus (strain ATCC 8482 / DSM 1447 / JCM 5826 / CCUG 4940 / NBRC 14291 / NCTC 11154) (Bacteroides vulgatus), this protein is Glycine N(alpha)-acyltransferase.